We begin with the raw amino-acid sequence, 180 residues long: Trafficking protein particle complex subunit 3 (180 aa).

Cys68 carries S-palmitoyl cysteine lipidation.

Belongs to the TRAPP small subunits family. BET3 subfamily. In terms of assembly, homodimer. Component of the multisubunit transport protein particle (TRAPP) complex, which includes at least TRAPPC2, TRAPPC2L, TRAPPC3, TRAPPC3L, TRAPPC4, TRAPPC5, TRAPPC8, TRAPPC9, TRAPPC10, TRAPPC11 and TRAPPC12. Heterodimer with TRAPPC6A. The heterodimer TRAPPC3-TRAPPC6A interacts with TRAPPC2L. Heterodimer with TRAPPC6b. The heterodimer TRAPPC6B-TRAPPC3 interacts with TRAPPC1 likely providing a core for TRAPP complex formation. As to expression, widely expressed. Expressed in lung, heart, liver, spleen, brain and kidney.

It localises to the golgi apparatus. The protein resides in the cis-Golgi network. The protein localises to the endoplasmic reticulum. Functionally, may play a role in vesicular transport from endoplasmic reticulum to Golgi. This chain is Trafficking protein particle complex subunit 3, found in Mus musculus (Mouse).